Reading from the N-terminus, the 1321-residue chain is C-Jun-amino-terminal kinase-interacting protein 4 (1321 aa).

Residue Met1 is modified to N-acetylmethionine. Residues 7 to 95 form the RH1 domain; that stretch reads VVYQEEPGGS…ITQYEREKAL (89 aa). Residues 66 to 166 are a coiled coil; it reads AQDQEHQVEL…NALHQRHTEM (101 aa). 5 positions are modified to phosphoserine: Ser109, Ser183, Ser185, Ser194, and Ser203. A disordered region spans residues 203–292; sequence SLGIFPLPAG…SDVATIPTDT (90 aa). Thr217 is modified (phosphothreonine). The span at 236-253 shows a compositional bias: polar residues; that stretch reads ELSQPRSHTSLKVSNSPE. 5 positions are modified to phosphoserine: Ser238, Ser251, Ser265, Ser268, and Ser272. Polar residues predominate over residues 266-285; it reads DVSQGGSKATTPASTANSDV. Thr292 is modified (phosphothreonine). Residues Ser311, Ser329, Ser332, and Ser347 each carry the phosphoserine modification. A phosphothreonine mark is found at Thr348, Thr365, and Thr418. A coiled-coil region spans residues 408–534; it reads REVENLILEN…LQEAVRWTEM (127 aa). Residues 473-489 are compositionally biased toward basic and acidic residues; that stretch reads LRKARAEAEDARQKAKD. Disordered stretches follow at residues 473–500 and 563–600; these read LRKA…TAQR and SSNT…SQLP. The RH2 domain occupies 500–571; the sequence is RKRFTRVEMA…SSSNTTKKPE (72 aa). The residue at position 586 (Thr586) is a Phosphothreonine. Position 588 is a phosphoserine (Ser588). The residue at position 595 (Thr595) is a Phosphothreonine. Ser705, Ser728, Ser730, Ser732, and Ser733 each carry phosphoserine. Residues 724-758 are a coiled coil; that stretch reads SKQRSASQSSLDKLDQELKEQQKELKNQEELSSLV. The disordered stretch occupies residues 854-906; sequence GAATSPSTNGASPVMDKPPEMEAENSEVDENVPTAEEATEATEGNAGSAEDTV. Residues 855 to 864 show a composition bias toward polar residues; it reads AATSPSTNGA. Residues 874 to 883 show a composition bias toward acidic residues; the sequence is MEAENSEVDE. Residues 894 to 903 show a composition bias toward low complexity; sequence ATEGNAGSAE. The residue at position 1188 (Ser1188) is a Phosphoserine. Residues 1239–1266 are disordered; it reads PQSSSSGTDLTGDKAGPSAQEPGSQTPL. Thr1264 carries the post-translational modification Phosphothreonine.

It belongs to the JIP scaffold family. Homodimer. The homodimer interacts with ARF6, forming a heterotetramer. Homooligomer. Interacts with MAX, MAPK14, MAP3K3, MYC, KNS2 and MAP2K4. Interaction with KNS2 is important in the formation of ternary complex with MAPK8. Interacts with NFKB1. Interacts with PIP4P1. Interacts with PIKFYVE. As to quaternary structure, interacts with MAPK8, MAPK9, MAPK10. In terms of processing, phosphorylated by MAPK8 and MAPK14. As to expression, expressed only in testis on the round spermatids of stage I, II and II. Absent in spermatogonia and spermatocyte. In terms of tissue distribution, expressed in testis and in acute myeloid leukemia (AML) patients. Expressed in testis.

The protein localises to the cytoplasm. It is found in the perinuclear region. Its subcellular location is the lysosome membrane. It localises to the cytoplasmic vesicle. The protein resides in the secretory vesicle. The protein localises to the acrosome. May play a role in spermatozoa-egg-interaction. The JNK-interacting protein (JIP) group of scaffold proteins selectively mediates JNK signaling by aggregating specific components of the MAPK cascade to form a functional JNK signaling module. Regulates lysosomal positioning by acting as an adapter protein which links PIP4P1-positive lysosomes to the dynein-dynactin complex. Assists PIKFYVE selective functionality in microtubule-based endosome-to-TGN trafficking. The sequence is that of C-Jun-amino-terminal kinase-interacting protein 4 from Homo sapiens (Human).